A 444-amino-acid chain; its full sequence is MRNIIYFILSLLFSVTSYALETINIEHGRADPTPIAVNKFYADNSAADVLGHDMVKVISNDLKLSGLFRPISAASFIEEKTGIEYKPLFAAWRQINASLLVNGEVKKLESGKFQISFILWDTLLEKQLVGEILEVPKNLWRRAAHKIADKIYEKITGDAGYFDTKIVYVSESSSLPKIKRIALMDYDGANNKYLTNGKSLVLTPRFARSADKIFYVSYATKRRVLVYEKDLKTGKESVVGDFPGISFAPRFSPDGRKAVMSIAKNGSTHIYEIDLATKRLHKLTDGFGINTSPSYSPDGTKIVYNSDRNGVPQLYIMNSDGSDVQRISFGGGSYAAPSWSPRGDYIAFTKITKGDGGKTFNIGIMKACPQDNKNSERIITSGYLVESPCWSPNGRVIMFAKGWPSSSKAPGKNKIFAIDLTGHNEREIMTPADASDPEWSGVLN.

A signal peptide spans M1–A19.

The protein belongs to the TolB family. As to quaternary structure, the Tol-Pal system is composed of five core proteins: the inner membrane proteins TolA, TolQ and TolR, the periplasmic protein TolB and the outer membrane protein Pal. They form a network linking the inner and outer membranes and the peptidoglycan layer.

It localises to the periplasm. Part of the Tol-Pal system, which plays a role in outer membrane invagination during cell division and is important for maintaining outer membrane integrity. In Rickettsia rickettsii (strain Sheila Smith), this protein is Tol-Pal system protein TolB.